A 147-amino-acid polypeptide reads, in one-letter code: Hemoglobin subunit beta (147 aa).

V2 carries the post-translational modification N-acetylvaline. In terms of domain architecture, Globin spans 3–147; sequence HLTGDEKAAV…VANALAHKYH (145 aa). Residue T13 is modified to Phosphothreonine. S45 carries the phosphoserine modification. Residue K60 is modified to N6-acetyllysine. H64 lines the heme b pocket. K83 carries the N6-acetyllysine modification. H93 is a binding site for heme b. At C94 the chain carries S-nitrosocysteine. K145 is modified (N6-acetyllysine).

The protein belongs to the globin family. In terms of assembly, heterotetramer of two alpha chains and two beta chains. As to expression, red blood cells.

Its function is as follows. Involved in oxygen transport from the lung to the various peripheral tissues. The sequence is that of Hemoglobin subunit beta (HBB) from Saimiri sciureus (Common squirrel monkey).